A 442-amino-acid chain; its full sequence is tRNA modification GTPase MnmE (442 aa).

The (6S)-5-formyl-5,6,7,8-tetrahydrofolate site is built by Arg24, Glu82, and Lys120. Positions Gly217–Glu367 constitute a TrmE-type G domain. GTP is bound by residues Asn227 to Thr232, Ser246 to Thr252, and Asp271 to Gly274. Ser231 contributes to the Mg(2+) binding site. Ser246 contributes to the K(+) binding site. Thr252 contacts Mg(2+). Lys442 lines the (6S)-5-formyl-5,6,7,8-tetrahydrofolate pocket.

Belongs to the TRAFAC class TrmE-Era-EngA-EngB-Septin-like GTPase superfamily. TrmE GTPase family. As to quaternary structure, homodimer. Heterotetramer of two MnmE and two MnmG subunits. Requires K(+) as cofactor.

The protein resides in the cytoplasm. In terms of biological role, exhibits a very high intrinsic GTPase hydrolysis rate. Involved in the addition of a carboxymethylaminomethyl (cmnm) group at the wobble position (U34) of certain tRNAs, forming tRNA-cmnm(5)s(2)U34. This chain is tRNA modification GTPase MnmE, found in Wolbachia pipientis subsp. Culex pipiens (strain wPip).